Reading from the N-terminus, the 396-residue chain is Digeranylgeranylglycerophospholipid reductase (396 aa).

FAD contacts are provided by Gly-14, Glu-33, Cys-44, Gly-45, Gly-47, Arg-100, Ala-124, Glu-162, Asp-283, Gly-295, and Ile-296. A 2,3-bis-O-(geranylgeranyl)-sn-glycerol 1-phospholipid-binding residues include Lys-338 and Val-374.

This sequence belongs to the geranylgeranyl reductase family. DGGGPL reductase subfamily. As to quaternary structure, monomer. FAD serves as cofactor.

Its subcellular location is the cell membrane. The catalysed reaction is 2,3-bis-O-(phytanyl)-sn-glycerol 1-phosphate + 8 NADP(+) = 2,3-bis-O-(geranylgeranyl)-sn-glycerol 1-phosphate + 8 NADPH + 8 H(+). It catalyses the reaction 2,3-bis-O-(phytanyl)-sn-glycerol 1-phosphate + 8 NAD(+) = 2,3-bis-O-(geranylgeranyl)-sn-glycerol 1-phosphate + 8 NADH + 8 H(+). It carries out the reaction a 2,3-bis-O-phytanyl-sn-glycerol 1-phospholipid + 8 A = a 2,3-bis-O-(geranylgeranyl)-sn-glycerol 1-phospholipid + 8 AH2. The enzyme catalyses CDP-2,3-bis-O-(geranylgeranyl)-sn-glycerol + 8 AH2 = CDP-2,3-bis-O-(phytanyl)-sn-glycerol + 8 A. The catalysed reaction is archaetidylserine + 8 AH2 = 2,3-bis-O-phytanyl-sn-glycero-3-phospho-L-serine + 8 A. Its pathway is membrane lipid metabolism; glycerophospholipid metabolism. Is involved in the reduction of 2,3-digeranylgeranylglycerophospholipids (unsaturated archaeols) into 2,3-diphytanylglycerophospholipids (saturated archaeols) in the biosynthesis of archaeal membrane lipids. Catalyzes the formation of archaetidic acid (2,3-di-O-phytanyl-sn-glyceryl phosphate) from 2,3-di-O-geranylgeranylglyceryl phosphate (DGGGP) via the hydrogenation of each double bond of the isoprenoid chains. Can use both NADH and NADPH as electron donors. Also catalyzes the reduction of 2,3-di-O-geranylgeranylglyceryl phosphate analogs such as 2,3-di-O-phytyl-sn-glyceryl phosphate (DPHGP), 3-O-(2,3-di-O-phytyl-sn-glycero-phospho)-sn-glycerol (DPHGPG) and 2,3-di-O-phytyl-sn-glycero-phosphoethanolamine (DPHGPE). Is not active toward 2,3-di-O-geranylgeranylglycerol. Is also probably able to reduce double bonds of geranyl groups in CDP-2,3-bis-O-(geranylgeranyl)-sn-glycerol and archaetidylserine, thus acting at various stages in the biosynthesis of archaeal membrane lipids. The polypeptide is Digeranylgeranylglycerophospholipid reductase (Thermoplasma acidophilum (strain ATCC 25905 / DSM 1728 / JCM 9062 / NBRC 15155 / AMRC-C165)).